We begin with the raw amino-acid sequence, 283 residues long: 4-diphosphocytidyl-2-C-methyl-D-erythritol kinase (283 aa).

The active site involves Lys10. ATP is bound at residue 99 to 109 (PMGGGLGGGSS). Asp141 is an active-site residue.

It belongs to the GHMP kinase family. IspE subfamily. In terms of assembly, homodimer.

It catalyses the reaction 4-CDP-2-C-methyl-D-erythritol + ATP = 4-CDP-2-C-methyl-D-erythritol 2-phosphate + ADP + H(+). It participates in isoprenoid biosynthesis; isopentenyl diphosphate biosynthesis via DXP pathway; isopentenyl diphosphate from 1-deoxy-D-xylulose 5-phosphate: step 3/6. In terms of biological role, catalyzes the phosphorylation of the position 2 hydroxy group of 4-diphosphocytidyl-2C-methyl-D-erythritol. In Escherichia coli O81 (strain ED1a), this protein is 4-diphosphocytidyl-2-C-methyl-D-erythritol kinase.